The following is a 198-amino-acid chain: uncharacterized protein (198 aa).

An HTH tetR-type domain is found at 11–71 (EGTHKAILSA…DSFLSTATDR (61 aa)). The segment at residues 34–53 (TVDKIAERAKVSKATIYKWW) is a DNA-binding region (H-T-H motif).

This is an uncharacterized protein from Bacillus subtilis (strain 168).